Here is a 644-residue protein sequence, read N- to C-terminus: Exoribonuclease 2 (644 aa).

The RNB domain maps to 189-516 (RQDLTALNFV…NHRLLKAVIK (328 aa)). The S1 motif domain maps to 561–643 (NTRFAAEIID…ETRSIIARPA (83 aa)).

This sequence belongs to the RNR ribonuclease family. RNase II subfamily.

The protein resides in the cytoplasm. It catalyses the reaction Exonucleolytic cleavage in the 3'- to 5'-direction to yield nucleoside 5'-phosphates.. In terms of biological role, involved in mRNA degradation. Hydrolyzes single-stranded polyribonucleotides processively in the 3' to 5' direction. The sequence is that of Exoribonuclease 2 from Salmonella enteritidis PT4 (strain P125109).